We begin with the raw amino-acid sequence, 455 residues long: Phosphoglycerate kinase, glycosomal (455 aa).

(2R)-3-phosphoglycerate-binding residues include V23, D24, F25, N26, R39, S61, H62, G64, R65, R132, H168, and R169. ADP-binding residues include G214 and A215. G214 is a CDP binding site. The AMP site is built by A215 and K216. A215 contacts ATP. Position 215 (A215) interacts with Mg(2+). K216 is a binding site for (2R)-3-phosphoglycerate. D219 serves as a coordination point for CDP. Position 219 (D219) interacts with Mg(2+). ADP is bound by residues K220 and G238. Position 220 (K220) interacts with AMP. K220 contributes to the ATP binding site. Position 238 (G238) interacts with CDP. AMP is bound by residues A239 and A311. ATP is bound by residues A239 and A311. Positions 311 and 335 each coordinate ADP. Positions 336 and 341 each coordinate CDP. ADP is bound by residues F341, E342, D374, and T375. E342 contributes to the AMP binding site. 3 residues coordinate ATP: E342, D374, and T375. D374 is a Mg(2+) binding site. The topogenic signal stretch occupies residues 417-455 (DAKAPAAAAAAGGDCPCGSGCAAVPAAATATVSMVLASP).

It belongs to the phosphoglycerate kinase family. In terms of assembly, monomer. Mg(2+) serves as cofactor.

It localises to the glycosome. It catalyses the reaction (2R)-3-phosphoglycerate + ATP = (2R)-3-phospho-glyceroyl phosphate + ADP. It participates in carbohydrate degradation; glycolysis; pyruvate from D-glyceraldehyde 3-phosphate: step 2/5. The polypeptide is Phosphoglycerate kinase, glycosomal (PGKC) (Crithidia fasciculata).